We begin with the raw amino-acid sequence, 185 residues long: Ribosome-recycling factor (185 aa).

It belongs to the RRF family.

It localises to the cytoplasm. In terms of biological role, responsible for the release of ribosomes from messenger RNA at the termination of protein biosynthesis. May increase the efficiency of translation by recycling ribosomes from one round of translation to another. This Thermus thermophilus (strain ATCC BAA-163 / DSM 7039 / HB27) protein is Ribosome-recycling factor.